The primary structure comprises 475 residues: MNSSYLNFKDKHILVVGDVMLDRYWHGGTSRISPEAPVQVVKVSSIEDRPGGAANVALGLAKLGVSVTLVGVVGNDENADVLARCLEDAGVICRFVRSETLPTITKLRVMSRHQQLIRLDFEEREDSLSQNEALAKVVEECLPKSDAVIFSDYAKGCLADVQSLIKLSNAAKVPSFVDPKGNDFSIYQGATLVKPNLLEFETIVGKCSSTKELEEKAKALREQFGWKALLVTRGEDGLILLSDDKPPFSLATAAKEVFDVTGAGDTVVAVLTAVYVTSKRFIDAVEYANQAAGYVVGKLGTASISAERLDAIMFQRSHNTNFGVLSPKDLLEQIKLAQMNGEKIVFTNGCFDILHPGHIAYMKQAKALGDRLIVAVNTDASVKRLKGEKRPINNLIHRMSVLEGVGSIDWVTWFDEDTPKEIIEFLTPDVLVKGGDYTIETIVGADHVLAHGGEVKVLTFVDGYSTTSIIEKANL.

The ribokinase stretch occupies residues 1–320 (MNSSYLNFKD…AIMFQRSHNT (320 aa)). 196–199 (NLLE) provides a ligand contact to ATP. Aspartate 265 is a catalytic residue. The segment at 346 to 475 (FTNGCFDILH…TTSIIEKANL (130 aa)) is cytidylyltransferase.

This sequence in the N-terminal section; belongs to the carbohydrate kinase PfkB family. In the C-terminal section; belongs to the cytidylyltransferase family. Homodimer.

The enzyme catalyses D-glycero-beta-D-manno-heptose 7-phosphate + ATP = D-glycero-beta-D-manno-heptose 1,7-bisphosphate + ADP + H(+). The catalysed reaction is D-glycero-beta-D-manno-heptose 1-phosphate + ATP + H(+) = ADP-D-glycero-beta-D-manno-heptose + diphosphate. It participates in nucleotide-sugar biosynthesis; ADP-L-glycero-beta-D-manno-heptose biosynthesis; ADP-L-glycero-beta-D-manno-heptose from D-glycero-beta-D-manno-heptose 7-phosphate: step 1/4. It functions in the pathway nucleotide-sugar biosynthesis; ADP-L-glycero-beta-D-manno-heptose biosynthesis; ADP-L-glycero-beta-D-manno-heptose from D-glycero-beta-D-manno-heptose 7-phosphate: step 3/4. In terms of biological role, catalyzes the phosphorylation of D-glycero-D-manno-heptose 7-phosphate at the C-1 position to selectively form D-glycero-beta-D-manno-heptose-1,7-bisphosphate. Catalyzes the ADP transfer from ATP to D-glycero-beta-D-manno-heptose 1-phosphate, yielding ADP-D-glycero-beta-D-manno-heptose. The protein is Bifunctional protein HldE of Marinomonas sp. (strain MWYL1).